A 289-amino-acid chain; its full sequence is Oxaloacetate decarboxylase 1 (289 aa).

Position 50 (Ser50) interacts with substrate. Asp88 lines the Mg(2+) pocket. Arg159 and His235 together coordinate substrate.

It belongs to the isocitrate lyase/PEP mutase superfamily. Oxaloacetate decarboxylase family. Homotetramer; dimer of dimers. Requires Mg(2+) as cofactor.

The enzyme catalyses oxaloacetate + H(+) = pyruvate + CO2. Catalyzes the decarboxylation of oxaloacetate into pyruvate. Seems to play a role in maintaining cellular concentrations of bicarbonate and pyruvate. This is Oxaloacetate decarboxylase 1 from Pseudomonas fluorescens (strain Pf0-1).